Here is a 713-residue protein sequence, read N- to C-terminus: Low-density lipoprotein receptor-related protein 10 (713 aa).

Residues M1–A17 form the signal peptide. The Extracellular segment spans residues R18–K441. Intrachain disulfides connect C29/C58 and C81/C99. One can recognise a CUB 1 domain in the interval C29–D137. N57 carries an N-linked (GlcNAc...) asparagine glycan. Residue N112 is glycosylated (N-linked (GlcNAc...) asparagine). The region spanning L140–S176 is the LDL-receptor class A 1 domain. 4 cysteine pairs are disulfide-bonded: C141–C153, C148–C166, C160–C175, and C193–C221. In terms of domain architecture, CUB 2 spans C193–R306. Residues N194 and N300 are each glycosylated (N-linked (GlcNAc...) asparagine). LDL-receptor class A domains lie at Y308–P355, G356–R398, and H399–S435. 9 disulfides stabilise this stretch: C309/C332, C316/C345, C339/C354, C357/C375, C364/C388, C382/C397, C400/C412, C407/C425, and C419/C434. Residues V442–G462 form a helical membrane-spanning segment. Over C463–A713 the chain is Cytoplasmic. The disordered stretch occupies residues L566–E636. The residue at position 596 (T596) is a Phosphothreonine. The span at P614–S626 shows a compositional bias: pro residues.

Belongs to the LDLR family. Highly expressed in heart, lung, liver and liver. Expressed at low level in brain and spleen. Weakly or not expressed in testis and skeletal muscle. In liver, it is expressed in hepatocytes and at higher level in sinusoidal lining. In the kidney, it is expressed in peritubular capillaries. In brain, it is expressed in the epithelium of the choroid plexus ependymal cells of the third ventricle pia matter, and to lesser extent in hippocampal fields CA2 and CA3.

The protein resides in the membrane. Its subcellular location is the coated pit. Functionally, probable receptor, which is involved in the internalization of lipophilic molecules and/or signal transduction. May be involved in the uptake of lipoprotein APOE in liver. The protein is Low-density lipoprotein receptor-related protein 10 (Lrp10) of Mus musculus (Mouse).